Consider the following 485-residue polypeptide: Lysophospholipid acyltransferase 5 (485 aa).

N-acetylalanine is present on A2. 7 helical membrane passes run 35–55, 82–102, 108–128, 139–158, 176–196, 232–252, and 283–303; these read ASEQALRLIISIFLGYPFALF, YNFGTQLYHSLLCIVLQFLIL, TITAVLTTFCVQMGYLLAGYY, WTMPHCVLTLKLIGLAMDYY, IWGVPSLLEISGFSYFYGAFL, LALGLVYLVGYTLLSPHITED, and VTCWLVTEGVCILTGLGFNGL. Residues N336 and H372 contribute to the active site. 3 consecutive transmembrane segments (helical) span residues 362 to 382, 420 to 440, and 448 to 468; these read GLSLLFLALWHGLHSGYLVCF, LAQQTIHWLFMGYSMTAFCLF, and VYKSIYFLGHVFFLSLLFILP. Positions 482–485 match the Di-lysine motif motif; it reads KKME.

This sequence belongs to the membrane-bound acyltransferase family.

The protein resides in the endoplasmic reticulum membrane. The catalysed reaction is a 1-acyl-sn-glycero-3-phosphocholine + an acyl-CoA = a 1,2-diacyl-sn-glycero-3-phosphocholine + CoA. It catalyses the reaction a 1-acyl-sn-glycero-3-phosphoethanolamine + an acyl-CoA = a 1,2-diacyl-sn-glycero-3-phosphoethanolamine + CoA. The enzyme catalyses a 1-acyl-sn-glycero-3-phospho-L-serine + an acyl-CoA = a 1,2-diacyl-sn-glycero-3-phospho-L-serine + CoA. It carries out the reaction (9Z,12Z)-octadecadienoyl-CoA + a 1-acyl-sn-glycero-3-phosphocholine = 1-acyl-2-(9Z,12Z)-octadecadienoyl-sn-glycero-3-phosphocholine + CoA. The catalysed reaction is (5Z,8Z,11Z,14Z)-eicosatetraenoyl-CoA + a 1-acyl-sn-glycero-3-phosphocholine = 1-acyl-2-(5Z,8Z,11Z,14Z-eicosatetraenoyl)-sn-glycero-3-phosphocholine + CoA. It catalyses the reaction dodecanoyl-CoA + 1-hexadecanoyl-sn-glycero-3-phosphocholine = 1-hexadecanoyl-2-dodecanoyl-sn-glycero-3-phosphocholine + CoA. The enzyme catalyses octadecanoyl-CoA + 1-hexadecanoyl-sn-glycero-3-phosphocholine = 1-hexadecanoyl-2-octadecanoyl-sn-glycero-3-phosphocholine + CoA. It carries out the reaction 1-dodecanoyl-sn-glycero-3-phosphocholine + hexadecanoyl-CoA = 1-dodecanoyl-2-hexadecanoyl-sn-glycero-3-phosphocholine + CoA. The catalysed reaction is 1-tetradecanoyl-sn-glycero-3-phosphocholine + hexadecanoyl-CoA = 1-tetradecanoyl-2-hexadecanoyl-sn-glycero-3-phosphocholine + CoA. It catalyses the reaction 1-hexadecanoyl-sn-glycero-3-phosphocholine + hexadecanoyl-CoA = 1,2-dihexadecanoyl-sn-glycero-3-phosphocholine + CoA. The enzyme catalyses 1-octadecanoyl-sn-glycero-3-phosphocholine + hexadecanoyl-CoA = 1-octadecanoyl-2-hexadecanoyl-sn-glycero-3-phosphocholine + CoA. It carries out the reaction 1-(9Z-octadecenoyl)-sn-glycero-3-phosphocholine + hexadecanoyl-CoA = 1-(9Z-octadecenoyl)-2-hexadecanoyl-sn-glycero-3-phosphocholine + CoA. The catalysed reaction is (9Z)-hexadecenoyl-CoA + 1-hexadecanoyl-sn-glycero-3-phosphocholine = 1-hexadecanoyl-2-(9Z-hexadecenoyl)-sn-glycero-3-phosphocholine + CoA. It catalyses the reaction 1-hexadecanoyl-sn-glycero-3-phosphocholine + (9Z)-octadecenoyl-CoA = 1-hexadecanoyl-2-(9Z-octadecenoyl)-sn-glycero-3-phosphocholine + CoA. The enzyme catalyses (9Z,12Z)-octadecadienoyl-CoA + 1-hexadecanoyl-sn-glycero-3-phosphocholine = 1-hexadecanoyl-2-(9Z,12Z-octadecadienoyl)-sn-glycero-3-phosphocholine + CoA. It carries out the reaction 1-dodecanoyl-sn-glycero-3-phosphocholine + (5Z,8Z,11Z,14Z)-eicosatetraenoyl-CoA = 1-dodecanoyl-2-(5Z,8Z,11Z,14Z)-eicosatetraenoyl-sn-glycero-3-phosphocholine + CoA. The catalysed reaction is (5Z,8Z,11Z,14Z)-eicosatetraenoyl-CoA + 1-hexadecanoyl-sn-glycero-3-phosphocholine = 1-hexadecanoyl-2-(5Z,8Z,11Z,14Z-eicosatetraenoyl)-sn-glycero-3-phosphocholine + CoA. It catalyses the reaction 1-octadecanoyl-sn-glycero-3-phosphocholine + (5Z,8Z,11Z,14Z)-eicosatetraenoyl-CoA = 1-octadecanoyl-2-(5Z,8Z,11Z,14Z-eicosatetraenoyl)-sn-glycero-3-phosphocholine + CoA. The enzyme catalyses 1-eicosanoyl-sn-glycero-3-phosphocholine + (5Z,8Z,11Z,14Z)-eicosatetraenoyl-CoA = 1-eicosanoyl-2-(5Z,8Z,11Z,14Z)-eicosatetraenoyl-sn-glycero-3-phosphocholine + CoA. It carries out the reaction 1-(9Z-octadecenoyl)-sn-glycero-3-phosphocholine + (9Z)-octadecenoyl-CoA = 1,2-di-(9Z-octadecenoyl)-sn-glycero-3-phosphocholine + CoA. The catalysed reaction is 1-(9Z-octadecenoyl)-sn-glycero-3-phosphocholine + (9Z,12Z)-octadecadienoyl-CoA = 1-(9Z)-octadecenoyl-2-(9Z,12Z)-octadecadienoyl-sn-glycero-3-phosphocholine + CoA. It catalyses the reaction 1-(9Z-octadecenoyl)-sn-glycero-3-phosphocholine + (5Z,8Z,11Z,14Z)-eicosatetraenoyl-CoA = 1-(9Z)-octadecenoyl-2-(5Z,8Z,11Z,14Z)-icosatetraenoyl-sn-glycero-3-phosphocholine + CoA. The enzyme catalyses a 1-acyl-sn-glycero-3-phosphoethanolamine + (9Z,12Z)-octadecadienoyl-CoA = 1-acyl-2-(9Z,12Z)-octadecadienoyl-sn-glycero-3-phosphoethanolamine + CoA. It carries out the reaction 1-(9Z-octadecenoyl)-sn-glycero-3-phosphoethanolamine + (9Z,12Z)-octadecadienoyl-CoA = 1-(9Z)-octadecenoyl-2-(9Z,12Z)-octadecadienoyl-sn-glycero-3-phosphoethanolamine + CoA. The catalysed reaction is 1-(10Z-heptadecenoyl)-sn-glycero-3-phosphoethanolamine + (9Z,12Z)-octadecadienoyl-CoA = 1-(10Z-heptadecenoyl)-2-(9Z,12Z-octadecadienoyl)-sn-glycero-3-phosphoethanolamine + CoA. It catalyses the reaction a 1-acyl-sn-glycero-3-phosphoethanolamine + (5Z,8Z,11Z,14Z)-eicosatetraenoyl-CoA = 1-acyl-2-(5Z,8Z,11Z,14Z)-eicosatetraenoyl-sn-glycero-3-phosphoethanolamine + CoA. The enzyme catalyses 1-hexadecanoyl-sn-glycero-3-phosphoethanolamine + (5Z,8Z,11Z,14Z)-eicosatetraenoyl-CoA = 1-hexadecanoyl-2-(5Z,8Z,11Z,14Z-eicosatetraenoyl)-sn-glycero-3-phosphoethanolamine + CoA. It carries out the reaction 1-(9Z-octadecenoyl)-sn-glycero-3-phosphoethanolamine + (5Z,8Z,11Z,14Z)-eicosatetraenoyl-CoA = 1-(9Z)-octadecenoyl-2-(5Z,8Z,11Z,14Z)-eicosatetraenoyl-sn-glycero-3-phosphoethanolamine + CoA. The catalysed reaction is 1-(10Z-heptadecenoyl)-sn-glycero-3-phosphoethanolamine + (5Z,8Z,11Z,14Z)-eicosatetraenoyl-CoA = 1-(10Z-heptadecenoyl)-2-(5Z,8Z,11Z,14Z-eicosatetraenoyl)-sn-glycero-3-phosphoethanolamine + CoA. It catalyses the reaction a 1-O-(1Z-alkenyl)-sn-glycero-3-phosphoethanolamine + (5Z,8Z,11Z,14Z)-eicosatetraenoyl-CoA = 1-O-(1Z)-alkenyl-2-(5Z,8Z,11Z,14Z)-eicosatetraenoyl-sn-glycero-3-phosphoethanolamine + CoA. The enzyme catalyses a 1-acyl-sn-glycero-3-phospho-L-serine + (9Z,12Z)-octadecadienoyl-CoA = 1-acyl-2-(9Z,12Z-octadecadienoyl)-sn-glycero-3-phospho-L-serine + CoA. It carries out the reaction a 1-acyl-sn-glycero-3-phospho-L-serine + (5Z,8Z,11Z,14Z)-eicosatetraenoyl-CoA = 1-acyl-2-(5Z,8Z,11Z,14Z-eicosatetraenoyl)-sn-glycero-3-phospho-L-serine + CoA. The catalysed reaction is 1-hexadecanoyl-sn-glycero-3-phospho-L-serine + (9Z)-octadecenoyl-CoA = 1-hexadecanoyl-2-(9Z-octadecenoyl)-sn-glycero-3-phospho-L-serine + CoA. It catalyses the reaction 1-(9Z-octadecenoyl)-sn-glycero-3-phospho-L-serine + (9Z)-octadecenoyl-CoA = 1,2-di-(9Z)-octadecenoyl-sn-glycero-3-phospho-L-serine + CoA. The enzyme catalyses 1-hexadecanoyl-sn-glycero-3-phospho-L-serine + (9Z,12Z)-octadecadienoyl-CoA = 1-hexadecanoyl-2-(9Z,12Z-octadecadienoyl)-sn-glycero-3-phospho-L-serine + CoA. It carries out the reaction 1-(9Z-octadecenoyl)-sn-glycero-3-phospho-L-serine + (9Z,12Z)-octadecadienoyl-CoA = 1-(9Z-octadecenoyl)-2-(9Z,12Z-octadienoyl)-sn-glycero-3-phospho-L-serine + CoA. The catalysed reaction is 1-hexadecanoyl-sn-glycero-3-phospho-L-serine + (5Z,8Z,11Z,14Z)-eicosatetraenoyl-CoA = 1-hexadecanoyl-2-(5Z,8Z,11Z,14Z-eicosatetraenoyl)-sn-glycero-3-phospho-L-serine + CoA. It catalyses the reaction 1-(9Z-octadecenoyl)-sn-glycero-3-phospho-L-serine + (5Z,8Z,11Z,14Z)-eicosatetraenoyl-CoA = 1-(9Z-octadecenoyl)-2-(5Z,8Z,11Z,14Z-eicosatetraenoyl)-sn-glycero-3-phospho-L-serine + CoA. It participates in lipid metabolism; phospholipid metabolism. Functionally, lysophospholipid O-acyltransferase (LPLAT) that catalyzes the reacylation step of the phospholipid remodeling process also known as the Lands cycle. Catalyzes transfer of the fatty acyl chain from fatty acyl-CoA to 1-acyl lysophospholipid to form various classes of phospholipids. Converts 1-acyl lysophosphatidylcholine (LPC) into phosphatidylcholine (PC) (LPCAT activity), 1-acyl lysophosphatidylserine (LPS) into phosphatidylserine (PS) (LPSAT activity) and 1-acyl lysophosphatidylethanolamine (LPE) into phosphatidylethanolamine (PE) (LPEAT activity). Favors polyunsaturated fatty acyl-CoAs as acyl donors compared to saturated fatty acyl-CoAs. Has higher activity for LPC acyl acceptors compared to LPEs and LPSs. Can also transfer the fatty acyl chain from fatty acyl-CoA to 1-O-alkyl lysophospholipid or 1-O-alkenyl lysophospholipid with lower efficiency. Acts as a major LPC O-acyltransferase in liver and intestine. As a component of the liver X receptor/NR1H3 or NR1H2 signaling pathway, mainly catalyzes the incorporation of arachidonate into PCs of endoplasmic reticulum (ER) membranes, increasing membrane dynamics and enabling triacylglycerols transfer to nascent very low-density lipoprotein (VLDL) particles. Promotes processing of sterol regulatory protein SREBF1 in hepatocytes, likely by facilitating the translocation of SREBF1-SCAP complex from ER to the Golgi apparatus. Participates in mechanisms by which the liver X receptor/NR1H3 or NR1H2 signaling pathway counteracts lipid-induced ER stress response and inflammation. Down-regulates hepatic inflammation by limiting arachidonic acid availability for synthesis of inflammatory eicosanoids, such as prostaglandins. In enterocytes, acts as a component of a gut-brain feedback loop that coordinates dietary lipid absorption and food intake. Regulates the abundance of PCs containing linoleate and arachidonate in enterocyte membranes, enabling passive diffusion of fatty acids and cholesterol across the membrane for efficient chylomicron assembly. In the intestinal crypt, acts as a component of dietary-responsive phospholipid-cholesterol axis, regulating the biosynthesis of cholesterol and its mitogenic effects on intestinal stem cells. This Bos taurus (Bovine) protein is Lysophospholipid acyltransferase 5 (LPCAT3).